The following is a 376-amino-acid chain: DNA repair protein RAD51 homolog 3 (376 aa).

The interval 1 to 126 (MRGKTFRFEM…LMKTTEICGA (126 aa)) is required for Holliday junction resolution activity. Ser20 is modified (phosphoserine). The interaction with RAD51B, RAD51D and XRCC3 stretch occupies residues 79–136 (SESHKKCTALELLEQEHTQGFIITFCSALDDILGGGVPLMKTTEICGAPGVGKTQLCM). 125-132 (GAPGVGKT) provides a ligand contact to ATP. A Nuclear localization signal motif is present at residues 366–370 (RKRSR).

The protein belongs to the RecA family. RAD51 subfamily. Part of the RAD51 paralog protein complexes BCDX2 and CX3; the complexes have a ring-like structure arranged into a flat disc around a central channel. The BCDX2 complex consits of RAD51B, RAD51C, RAD51D and XRCC2; the CX3 complex consists of RAD51C and XRCC3. The BCDX2 subcomplex RAD51B:RAD51C interacts with RAD51. Interacts with SWSAP1; involved in homologous recombination repair. Interacts directly with PALB2 which may serve as a scaffold for a HR complex containing PALB2, BRCA2, RAD51C, RAD51 and XRCC3. Interacts with HELQ. Interacts with DNA damage up-regulated protein DDUP. Expressed in a variety of tissues, with highest expression in testis, heart muscle, spleen and prostate.

Its subcellular location is the nucleus. The protein localises to the cytoplasm. It localises to the perinuclear region. The protein resides in the mitochondrion. Functionally, essential for the homologous recombination (HR) pathway of DNA repair. Involved in the homologous recombination repair (HRR) pathway of double-stranded DNA breaks arising during DNA replication or induced by DNA-damaging agents. Part of the RAD51 paralog protein complexes BCDX2 and CX3 which act at different stages of the BRCA1-BRCA2-dependent HR pathway. Upon DNA damage, BCDX2 seems to act downstream of BRCA2 recruitment and upstream of RAD51 recruitment; CX3 seems to act downstream of RAD51 recruitment; both complexes bind predominantly to the intersection of the four duplex arms of the Holliday junction (HJ) and to junction of replication forks. The BCDX2 complex was originally reported to bind single-stranded DNA, single-stranded gaps in duplex DNA and specifically to nicks in duplex DNA. The BCDX2 subcomplex RAD51B:RAD51C exhibits single-stranded DNA-dependent ATPase activity suggesting an involvement in early stages of the HR pathway. Involved in RAD51 foci formation in response to DNA damage suggesting an involvement in early stages of HR probably in the invasion step. Has an early function in DNA repair in facilitating phosphorylation of the checkpoint kinase CHEK2 and thereby transduction of the damage signal, leading to cell cycle arrest and HR activation. Participates in branch migration and HJ resolution and thus is important for processing HR intermediates late in the DNA repair process; the function may be linked to the CX3 complex. Part of a PALB2-scaffolded HR complex containing BRCA2 and which is thought to play a role in DNA repair by HR. Protects RAD51 from ubiquitin-mediated degradation that is enhanced following DNA damage. Plays a role in regulating mitochondrial DNA copy number under conditions of oxidative stress in the presence of RAD51 and XRCC3. Contributes to DNA cross-link resistance, sister chromatid cohesion and genomic stability. Involved in maintaining centrosome number in mitosis. The protein is DNA repair protein RAD51 homolog 3 (RAD51C) of Homo sapiens (Human).